The sequence spans 118 residues: Fluoride-specific ion channel FluC 2 (118 aa).

Helical transmembrane passes span 1 to 21 (MIEALLVATGGFFGAITRFAI), 33 to 53 (FPLATFLINITGAFLLGYIIG), 55 to 75 (GVTTGWQLLLGTGFMGAFTTF), and 91 to 111 (ISTFLLYLSATYIIGILFAFL). Na(+) is bound by residues G70 and T73.

Belongs to the fluoride channel Fluc/FEX (TC 1.A.43) family.

The protein localises to the cell membrane. The enzyme catalyses fluoride(in) = fluoride(out). With respect to regulation, na(+) is not transported, but it plays an essential structural role and its presence is essential for fluoride channel function. Functionally, fluoride-specific ion channel. Important for reducing fluoride concentration in the cell, thus reducing its toxicity. This Bacillus cereus (strain ATCC 14579 / DSM 31 / CCUG 7414 / JCM 2152 / NBRC 15305 / NCIMB 9373 / NCTC 2599 / NRRL B-3711) protein is Fluoride-specific ion channel FluC 2.